Consider the following 119-residue polypeptide: Fluoride-specific ion channel FluC 2 (119 aa).

Transmembrane regions (helical) follow at residues 1-21 (MITV…RYGI), 33-53 (FPYA…FIFS), 56-76 (FSPF…TTFS), and 93-113 (VFTL…FLGY). Residues Gly-70 and Thr-73 each contribute to the Na(+) site.

It belongs to the fluoride channel Fluc/FEX (TC 1.A.43) family.

The protein localises to the cell membrane. It catalyses the reaction fluoride(in) = fluoride(out). With respect to regulation, na(+) is not transported, but it plays an essential structural role and its presence is essential for fluoride channel function. In terms of biological role, fluoride-specific ion channel. Important for reducing fluoride concentration in the cell, thus reducing its toxicity. The protein is Fluoride-specific ion channel FluC 2 of Lactobacillus johnsonii (strain CNCM I-12250 / La1 / NCC 533).